The primary structure comprises 668 residues: Transketolase 2 (668 aa).

Position 26 (His26) interacts with substrate. Residues His66 and 114–116 (GPL) contribute to the thiamine diphosphate site. Residue Asp155 coordinates Mg(2+). Gly156 and Asn185 together coordinate thiamine diphosphate. Asn185 and Ile187 together coordinate Mg(2+). Positions 261, 358, and 385 each coordinate substrate. His261 provides a ligand contact to thiamine diphosphate. The Proton donor role is filled by Glu413. Phe439 is a binding site for thiamine diphosphate. The substrate site is built by His463, Asp471, and Arg522.

Belongs to the transketolase family. As to quaternary structure, homodimer. Mg(2+) is required as a cofactor. Ca(2+) serves as cofactor. It depends on Mn(2+) as a cofactor. The cofactor is Co(2+). Requires thiamine diphosphate as cofactor.

It carries out the reaction D-sedoheptulose 7-phosphate + D-glyceraldehyde 3-phosphate = aldehydo-D-ribose 5-phosphate + D-xylulose 5-phosphate. Catalyzes the transfer of a two-carbon ketol group from a ketose donor to an aldose acceptor, via a covalent intermediate with the cofactor thiamine pyrophosphate. The polypeptide is Transketolase 2 (tktB) (Pasteurella multocida (strain Pm70)).